Reading from the N-terminus, the 215-residue chain is 3-isopropylmalate dehydratase small subunit (215 aa).

Belongs to the LeuD family. LeuD type 1 subfamily. As to quaternary structure, heterodimer of LeuC and LeuD.

It catalyses the reaction (2R,3S)-3-isopropylmalate = (2S)-2-isopropylmalate. The protein operates within amino-acid biosynthesis; L-leucine biosynthesis; L-leucine from 3-methyl-2-oxobutanoate: step 2/4. Catalyzes the isomerization between 2-isopropylmalate and 3-isopropylmalate, via the formation of 2-isopropylmaleate. The polypeptide is 3-isopropylmalate dehydratase small subunit (Cellvibrio japonicus (strain Ueda107) (Pseudomonas fluorescens subsp. cellulosa)).